The sequence spans 194 residues: 13S globulin basic chain (194 aa).

One can recognise a Cupin type-1 domain in the interval 13-162; it reads ENIKSPQEAD…SFQISSEEAE (150 aa).

This sequence belongs to the 11S seed storage protein (globulins) family. In terms of assembly, hexamer; each subunit is composed of an acidic and a basic chain derived from a single precursor and linked by a disulfide bond. As to expression, cotyledons and endosperm protein bodies.

Functionally, seed storage protein with a relatively high level of Lys and Met. The protein is 13S globulin basic chain of Fagopyrum esculentum (Common buckwheat).